The primary structure comprises 224 residues: Flagellar L-ring protein (224 aa).

Positions 1–15 are cleaved as a signal peptide; that stretch reads MARYLLLASTLLLAA. C16 carries the N-palmitoyl cysteine lipid modification. A lipid anchor (S-diacylglycerol cysteine) is attached at C16.

Belongs to the FlgH family. In terms of assembly, the basal body constitutes a major portion of the flagellar organelle and consists of four rings (L,P,S, and M) mounted on a central rod.

The protein resides in the cell outer membrane. Its subcellular location is the bacterial flagellum basal body. Functionally, assembles around the rod to form the L-ring and probably protects the motor/basal body from shearing forces during rotation. This is Flagellar L-ring protein from Shewanella sp. (strain ANA-3).